Reading from the N-terminus, the 386-residue chain is Protein RETICULATA-RELATED 4, chloroplastic (386 aa).

Residues 1-61 (MAIASCFFCV…RRVPITPVLS (61 aa)) constitute a chloroplast transit peptide. A disordered region spans residues 61–99 (SASSGNGGSDNNGGGLSGGGGGGDGGKNDGDGHGDEDRD). A compositionally biased stretch (gly residues) spans 65 to 85 (GNGGSDNNGGGLSGGGGGGDG). A compositionally biased stretch (basic and acidic residues) spans 86–99 (GKNDGDGHGDEDRD). The next 2 helical transmembrane spans lie at 201 to 221 (VVFA…YLPA) and 273 to 293 (KLFA…NAFI).

This sequence belongs to the RETICULATA family.

The protein resides in the plastid. Its subcellular location is the chloroplast membrane. May play a role in leaf development. The protein is Protein RETICULATA-RELATED 4, chloroplastic of Arabidopsis thaliana (Mouse-ear cress).